We begin with the raw amino-acid sequence, 103 residues long: Co-chaperonin GroES (103 aa).

The protein belongs to the GroES chaperonin family. As to quaternary structure, heptamer of 7 subunits arranged in a ring. Interacts with the chaperonin GroEL.

The protein resides in the cytoplasm. Functionally, together with the chaperonin GroEL, plays an essential role in assisting protein folding. The GroEL-GroES system forms a nano-cage that allows encapsulation of the non-native substrate proteins and provides a physical environment optimized to promote and accelerate protein folding. GroES binds to the apical surface of the GroEL ring, thereby capping the opening of the GroEL channel. This chain is Co-chaperonin GroES, found in Synechococcus sp. (strain WH7803).